The following is a 126-amino-acid chain: UPF0102 protein TP_0913 (126 aa).

The protein belongs to the UPF0102 family.

The chain is UPF0102 protein TP_0913 from Treponema pallidum (strain Nichols).